The chain runs to 547 residues: Serine/threonine-protein kinase pkn3 (547 aa).

Positions 18 to 288 (YRVEALIGEG…EAFKAELQAV (271 aa)) constitute a Protein kinase domain. ATP contacts are provided by residues 24–32 (IGEGGMGKV) and Lys-47. Asp-142 functions as the Proton acceptor in the catalytic mechanism. Positions 290 to 299 (KERRRMDSAP) are enriched in basic and acidic residues. The segment at 290-327 (KERRRMDSAPRRSANSSAVLAPLPRKSAASPQSDVRDA) is disordered.

The protein belongs to the protein kinase superfamily. Ser/Thr protein kinase family.

The enzyme catalyses L-seryl-[protein] + ATP = O-phospho-L-seryl-[protein] + ADP + H(+). It catalyses the reaction L-threonyl-[protein] + ATP = O-phospho-L-threonyl-[protein] + ADP + H(+). This is Serine/threonine-protein kinase pkn3 (pkn3) from Myxococcus xanthus.